The chain runs to 418 residues: Gamma-glutamyl phosphate reductase (418 aa).

It belongs to the gamma-glutamyl phosphate reductase family.

Its subcellular location is the cytoplasm. It catalyses the reaction L-glutamate 5-semialdehyde + phosphate + NADP(+) = L-glutamyl 5-phosphate + NADPH + H(+). The protein operates within amino-acid biosynthesis; L-proline biosynthesis; L-glutamate 5-semialdehyde from L-glutamate: step 2/2. In terms of biological role, catalyzes the NADPH-dependent reduction of L-glutamate 5-phosphate into L-glutamate 5-semialdehyde and phosphate. The product spontaneously undergoes cyclization to form 1-pyrroline-5-carboxylate. The sequence is that of Gamma-glutamyl phosphate reductase from Syntrophotalea carbinolica (strain DSM 2380 / NBRC 103641 / GraBd1) (Pelobacter carbinolicus).